Here is a 205-residue protein sequence, read N- to C-terminus: Thymidylate kinase (205 aa).

7–14 (GIDGSGKT) provides a ligand contact to ATP.

It belongs to the thymidylate kinase family.

It catalyses the reaction dTMP + ATP = dTDP + ADP. In terms of biological role, phosphorylation of dTMP to form dTDP in both de novo and salvage pathways of dTTP synthesis. The protein is Thymidylate kinase of Wolbachia pipientis subsp. Culex pipiens (strain wPip).